A 63-amino-acid chain; its full sequence is Cytochrome c oxidase subunit 7C, mitochondrial (63 aa).

The transit peptide at 1–16 directs the protein to the mitochondrion; that stretch reads MLGQSIRRFTTSVVRR. At 17–34 the chain is on the mitochondrial matrix side; it reads SHYEEGPGKNLPFSVENK. Lys-25 bears the N6-acetyllysine; alternate mark. Lys-25 bears the N6-succinyllysine; alternate mark. A helical membrane pass occupies residues 35–57; that stretch reads WRLLAMMTVYFGSGFAAPFFIVR. Residues 58-63 are Mitochondrial intermembrane-facing; that stretch reads HQLLKK.

The protein belongs to the cytochrome c oxidase VIIc family. Component of the cytochrome c oxidase (complex IV, CIV), a multisubunit enzyme composed of 14 subunits. The complex is composed of a catalytic core of 3 subunits MT-CO1, MT-CO2 and MT-CO3, encoded in the mitochondrial DNA, and 11 supernumerary subunits COX4I, COX5A, COX5B, COX6A, COX6B, COX6C, COX7A, COX7B, COX7C, COX8 and NDUFA4, which are encoded in the nuclear genome. The complex exists as a monomer or a dimer and forms supercomplexes (SCs) in the inner mitochondrial membrane with NADH-ubiquinone oxidoreductase (complex I, CI) and ubiquinol-cytochrome c oxidoreductase (cytochrome b-c1 complex, complex III, CIII), resulting in different assemblies (supercomplex SCI(1)III(2)IV(1) and megacomplex MCI(2)III(2)IV(2)). Interacts with RAB5IF.

It is found in the mitochondrion inner membrane. Its pathway is energy metabolism; oxidative phosphorylation. Functionally, component of the cytochrome c oxidase, the last enzyme in the mitochondrial electron transport chain which drives oxidative phosphorylation. The respiratory chain contains 3 multisubunit complexes succinate dehydrogenase (complex II, CII), ubiquinol-cytochrome c oxidoreductase (cytochrome b-c1 complex, complex III, CIII) and cytochrome c oxidase (complex IV, CIV), that cooperate to transfer electrons derived from NADH and succinate to molecular oxygen, creating an electrochemical gradient over the inner membrane that drives transmembrane transport and the ATP synthase. Cytochrome c oxidase is the component of the respiratory chain that catalyzes the reduction of oxygen to water. Electrons originating from reduced cytochrome c in the intermembrane space (IMS) are transferred via the dinuclear copper A center (CU(A)) of subunit 2 and heme A of subunit 1 to the active site in subunit 1, a binuclear center (BNC) formed by heme A3 and copper B (CU(B)). The BNC reduces molecular oxygen to 2 water molecules using 4 electrons from cytochrome c in the IMS and 4 protons from the mitochondrial matrix. The polypeptide is Cytochrome c oxidase subunit 7C, mitochondrial (Cox7c) (Mus musculus (Mouse)).